We begin with the raw amino-acid sequence, 363 residues long: MSNKKRIFFTGGGTGGHVFPGISIIQKLKELDNEIEFFWIGKKNSIEEKLIKEQNNIKFIWVPCGKLRRYFSFQNFTDFFKVILGIIKSFYVLKKYKPQIVYATGGFVSTPTIIASSLLKIKRITHEMDLDPGLATKINSKFANKIYTSFKESEKYFKNHKNIIYTGSPIRKEFLTPNPKIIKQLTQNTNKPIVSVLGGSLGANALNNLALFIKKYAEIYFIHQSGKNLNDLREDNYLRRQFFNAEEMASIEKFSNIIISRAGAGAIKEFANACTCVILIPFKKGSRGDQIKNAKLLKNQNACIYIDEDEILNTNILKVIKETLNDREKINSLKENIKKFNNKHSSTLIAKLLIEDIKETKSK.

Residues 14–16, Arg-171, Ser-200, and Gln-290 contribute to the UDP-N-acetyl-alpha-D-glucosamine site; that span reads TGG.

The protein belongs to the glycosyltransferase 28 family. MurG subfamily.

The protein localises to the cell inner membrane. The catalysed reaction is di-trans,octa-cis-undecaprenyl diphospho-N-acetyl-alpha-D-muramoyl-L-alanyl-D-glutamyl-meso-2,6-diaminopimeloyl-D-alanyl-D-alanine + UDP-N-acetyl-alpha-D-glucosamine = di-trans,octa-cis-undecaprenyl diphospho-[N-acetyl-alpha-D-glucosaminyl-(1-&gt;4)]-N-acetyl-alpha-D-muramoyl-L-alanyl-D-glutamyl-meso-2,6-diaminopimeloyl-D-alanyl-D-alanine + UDP + H(+). The protein operates within cell wall biogenesis; peptidoglycan biosynthesis. Functionally, cell wall formation. Catalyzes the transfer of a GlcNAc subunit on undecaprenyl-pyrophosphoryl-MurNAc-pentapeptide (lipid intermediate I) to form undecaprenyl-pyrophosphoryl-MurNAc-(pentapeptide)GlcNAc (lipid intermediate II). This chain is UDP-N-acetylglucosamine--N-acetylmuramyl-(pentapeptide) pyrophosphoryl-undecaprenol N-acetylglucosamine transferase, found in Borrelia garinii subsp. bavariensis (strain ATCC BAA-2496 / DSM 23469 / PBi) (Borreliella bavariensis).